Here is a 507-residue protein sequence, read N- to C-terminus: ATP synthase subunit alpha, chloroplastic (507 aa).

170–177 contributes to the ATP binding site; that stretch reads GDRQTGKT. At S383 the chain carries Phosphoserine.

Belongs to the ATPase alpha/beta chains family. In terms of assembly, F-type ATPases have 2 components, CF(1) - the catalytic core - and CF(0) - the membrane proton channel. CF(1) has five subunits: alpha(3), beta(3), gamma(1), delta(1), epsilon(1). CF(0) has four main subunits: a, b, b' and c. In terms of processing, only phosphorylated in mesophyll cells, and only when cells are grown under high rather than low light regimes (70 vs 900 umol photons/m-2/s).

It localises to the plastid. The protein localises to the chloroplast thylakoid membrane. It catalyses the reaction ATP + H2O + 4 H(+)(in) = ADP + phosphate + 5 H(+)(out). Produces ATP from ADP in the presence of a proton gradient across the membrane. The alpha chain is a regulatory subunit. In Zea mays (Maize), this protein is ATP synthase subunit alpha, chloroplastic.